A 161-amino-acid polypeptide reads, in one-letter code: uncharacterized protein (161 aa).

It to R.leguminosarum PsiB.

This is an uncharacterized protein from Sinorhizobium fredii (strain NBRC 101917 / NGR234).